The sequence spans 192 residues: Ras-like GTP-binding protein rhoA (192 aa).

12-19 serves as a coordination point for GTP; it reads GDGACGKT. Residues 34–42 carry the Effector region motif; sequence YVPTVFENY. Residues 59–63 and 117–120 contribute to the GTP site; these read DTAGQ and NKRD. Cys189 carries the post-translational modification Cysteine methyl ester. A lipid anchor (S-geranylgeranyl cysteine) is attached at Cys189. A propeptide spans 190–192 (removed in mature form); that stretch reads MIL.

The protein belongs to the small GTPase superfamily. Rho family. May interact with unc-89 (via DN and PH domains). Interacts with bli-3 and memo-1. In terms of tissue distribution, in larvae and adults, enriched at the tip of the head where the anterior sensory organ is located and in the pharyngeal nerve ring (at protein level). In embryos, enriched at the boundaries of dorsal cells undergoing intercalation, ventral enclosure and elongation.

The protein resides in the cell membrane. It localises to the cytoplasm. Its subcellular location is the cytoskeleton. It is found in the cell cortex. Its activity is regulated as follows. GTP hydrolysis is stimulated by unc-89. Required for ventral migration of epidermal cells during ventral enclosure in the embryo and for cell elongation. Also required for ventral migration of P cells during larval development. Involved in asymmetric spindle positioning during anaphase and establishment of cell polarity during embryo development. In adults, involved in regulation of multiple processes including locomotion, pharyngeal pumping, fecundity, ovulation, defecation and body morphology. In body wall muscles, regulates organization of myosin thick filaments downstream of unc-89. Association with the oxidase bli-3 promotes ROS production and this interaction may be modulated by memo-1, in order to control the oxidative stress response and longevity. The polypeptide is Ras-like GTP-binding protein rhoA (Caenorhabditis elegans).